Here is a 469-residue protein sequence, read N- to C-terminus: Probable ribonuclease FAU-1 (469 aa).

Belongs to the FAU-1 family.

Probable RNase involved in rRNA stability through maturation and/or degradation of precursor rRNAs. Binds to RNA in loop regions with AU-rich sequences. In Pyrococcus horikoshii (strain ATCC 700860 / DSM 12428 / JCM 9974 / NBRC 100139 / OT-3), this protein is Probable ribonuclease FAU-1.